The following is a 450-amino-acid chain: Phosphoglucosamine mutase (450 aa).

The active-site Phosphoserine intermediate is the S107. Residues S107, D246, D248, and D250 each coordinate Mg(2+). Phosphoserine is present on S107.

The protein belongs to the phosphohexose mutase family. Mg(2+) serves as cofactor. Activated by phosphorylation.

The enzyme catalyses alpha-D-glucosamine 1-phosphate = D-glucosamine 6-phosphate. Functionally, catalyzes the conversion of glucosamine-6-phosphate to glucosamine-1-phosphate. The chain is Phosphoglucosamine mutase from Dechloromonas aromatica (strain RCB).